Here is a 402-residue protein sequence, read N- to C-terminus: CCA-adding enzyme (402 aa).

Positions 32 and 35 each coordinate ATP. CTP is bound by residues Gly32 and Arg35. The Mg(2+) site is built by Asp45 and Asp47. ATP contacts are provided by Arg116, Asp159, Arg162, Arg165, and Arg168. Residues Arg116, Asp159, Arg162, Arg165, and Arg168 each coordinate CTP.

The protein belongs to the tRNA nucleotidyltransferase/poly(A) polymerase family. Bacterial CCA-adding enzyme type 3 subfamily. In terms of assembly, homodimer. It depends on Mg(2+) as a cofactor.

It catalyses the reaction a tRNA precursor + 2 CTP + ATP = a tRNA with a 3' CCA end + 3 diphosphate. It carries out the reaction a tRNA with a 3' CCA end + 2 CTP + ATP = a tRNA with a 3' CCACCA end + 3 diphosphate. Functionally, catalyzes the addition and repair of the essential 3'-terminal CCA sequence in tRNAs without using a nucleic acid template. Adds these three nucleotides in the order of C, C, and A to the tRNA nucleotide-73, using CTP and ATP as substrates and producing inorganic pyrophosphate. tRNA 3'-terminal CCA addition is required both for tRNA processing and repair. Also involved in tRNA surveillance by mediating tandem CCA addition to generate a CCACCA at the 3' terminus of unstable tRNAs. While stable tRNAs receive only 3'-terminal CCA, unstable tRNAs are marked with CCACCA and rapidly degraded. The protein is CCA-adding enzyme of Streptococcus pyogenes serotype M6 (strain ATCC BAA-946 / MGAS10394).